The primary structure comprises 107 residues: Heme-degrading monooxygenase (107 aa).

Residues I2–Y94 form the ABM domain. N6 contributes to the Fe cation binding site. A heme-binding site is contributed by H76.

This sequence belongs to the antibiotic biosynthesis monooxygenase family. Heme-degrading monooxygenase IsdG subfamily. Homodimer.

The protein resides in the cytoplasm. The catalysed reaction is heme b + 3 reduced [NADPH--hemoprotein reductase] + 3 O2 = biliverdin IXalpha + CO + Fe(2+) + 3 oxidized [NADPH--hemoprotein reductase] + 3 H2O + H(+). Functionally, allows bacterial pathogens to use the host heme as an iron source. Catalyzes the oxidative degradation of the heme macrocyclic porphyrin ring to the biliverdin in the presence of a suitable electron donor such as ascorbate or NADPH--cytochrome P450 reductase, with subsequent release of free iron. The sequence is that of Heme-degrading monooxygenase from Bacillus mycoides (strain KBAB4) (Bacillus weihenstephanensis).